The primary structure comprises 492 residues: Serine incorporator 4 (492 aa).

Helical transmembrane passes span 59-79 (YILL…KTVV), 113-133 (AVYR…VLLV), 148-168 (SFWS…FCIP), 179-199 (IGIC…TAFA), 219-239 (GVSL…VLLF), 254-274 (LLSL…APCI), 281-301 (SGLL…FSAL), 330-350 (IPDT…VLFA), 421-441 (GFHF…TNWF), and 464-484 (VASC…PLLA).

It belongs to the TDE1 family.

It localises to the membrane. Incorporates a polar amino acid serine into membranes and facilitates the synthesis of two serine-derived lipids, phosphatidylserine and sphingolipids. The protein is Serine incorporator 4 (Serinc4) of Mus musculus (Mouse).